We begin with the raw amino-acid sequence, 438 residues long: Adenosylhomocysteinase (438 aa).

Positions 64, 139, and 164 each coordinate substrate. An NAD(+)-binding site is contributed by 165 to 167; that stretch reads TTT. Residues Lys-194 and Asp-198 each contribute to the substrate site. NAD(+) contacts are provided by residues Asn-199, 228–233, Glu-251, Asn-286, 307–309, and Asn-352; these read GYGDVG and IGH.

Belongs to the adenosylhomocysteinase family. It depends on NAD(+) as a cofactor.

The protein resides in the cytoplasm. The enzyme catalyses S-adenosyl-L-homocysteine + H2O = L-homocysteine + adenosine. It functions in the pathway amino-acid biosynthesis; L-homocysteine biosynthesis; L-homocysteine from S-adenosyl-L-homocysteine: step 1/1. May play a key role in the regulation of the intracellular concentration of adenosylhomocysteine. The polypeptide is Adenosylhomocysteinase (Coxiella burnetii (strain Dugway 5J108-111)).